We begin with the raw amino-acid sequence, 115 residues long: Pancreatic progenitor cell differentiation and proliferation factor B (115 aa).

The segment at 21-48 (IGSTSSSSSCGSSEYSGEVIPHHPGLPK) is disordered. Low complexity predominate over residues 22–37 (GSTSSSSSCGSSEYSG).

It belongs to the PPDPF family.

In terms of biological role, probable regulator of exocrine pancreas development. In Danio rerio (Zebrafish), this protein is Pancreatic progenitor cell differentiation and proliferation factor B (ppdpfb).